The sequence spans 3313 residues: Cadherin EGF LAG seven-pass G-type receptor 3 (3313 aa).

A signal peptide spans 1–31; it reads MARRPLWWGLPGPSTPLLLLLLFSLFPSSRE. Over 32 to 2538 the chain is Extracellular; the sequence is EMGGGGDQGW…RLEGDLELLA (2507 aa). Disordered regions lie at residues 148–187 and 205–269; these read LPLDALSPGDSDLRNSSPHPSELLAQPDSPRPVAFQRNGR and EPGH…RMRS. Residues 258-268 show a composition bias toward basic and acidic residues; the sequence is HESRTAPERMR. Cadherin domains are found at residues 317-424, 425-536, 537-642, 643-747, 748-849, 850-952, 953-1058, 1059-1160, and 1161-1257; these read PQYN…APVF, EQAQ…APQF, SEKR…SPIF, VSTP…RPEF, TMKE…RPVF, QSAH…APQF, VASH…APVF, PAEE…SPVL, and NNFQ…VVII. N-linked (GlcNAc...) asparagine glycosylation is present at Asn623. The N-linked (GlcNAc...) asparagine glycan is linked to Asn838. Residues Asn1173, Asn1213, Asn1308, and Asn1318 are each glycosylated (N-linked (GlcNAc...) asparagine). The region spanning 1366–1424 is the EGF-like 1; calcium-binding domain; that stretch reads DDNVCLREPCENYMKCVSVLRFDSSAPFLASASTLFRPIQPIAGLRCRCPPGFTGDFCE. 9 cysteine pairs are disulfide-bonded: Cys1370/Cys1381, Cys1375/Cys1412, Cys1414/Cys1423, Cys1430/Cys1441, Cys1435/Cys1450, Cys1452/Cys1461, Cys1470/Cys1481, Cys1475/Cys1491, and Cys1493/Cys1504. Residues 1426-1462 enclose the EGF-like 2; calcium-binding domain; sequence ELDLCYSNPCRNGGACARREGGYTCVCRPRFTGEDCE. An EGF-like 3; calcium-binding domain is found at 1466–1505; that stretch reads EAGRCVPGVCRNGGTCTNAPNGGFRCQCPAGGAFEGPRCE. In terms of domain architecture, Laminin G-like 1 spans 1506–1710; the sequence is VAARSFPPSS…VANNGTTAGC (205 aa). Asn1640 and Asn1704 each carry an N-linked (GlcNAc...) asparagine glycan. 4 cysteine pairs are disulfide-bonded: Cys1684-Cys1710, Cys1717-Cys1728, Cys1722-Cys1737, and Cys1739-Cys1748. Positions 1713-1749 constitute an EGF-like 4; calcium-binding domain; sequence KSHFCASGPCKNGGLCSERWGGFSCDCPVGFGGKDCR. A Laminin G-like 2 domain is found at 1753–1935; it reads AHPYHFQGNG…SHRINVEPGC (183 aa). Residue Asn1761 is glycosylated (N-linked (GlcNAc...) asparagine). Cystine bridges form between Cys1906–Cys1935, Cys1941–Cys1952, Cys1946–Cys1961, Cys1963–Cys1972, Cys1976–Cys1987, Cys1981–Cys1999, Cys2001–Cys2010, Cys2018–Cys2031, and Cys2033–Cys2043. The region spanning 1937–1972 is the EGF-like 5; calcium-binding domain; it reads VTNPCASGPCPPHANCKDLWQTFSCTCWPGYYGPGC. A (3R)-3-hydroxyaspartate modification is found at Asp1954. Positions 1973–2011 constitute an EGF-like 6; calcium-binding domain; the sequence is VDACLLNPCQNQGSCRHLQGGPHGYTCDCASGYFGQHCE. One can recognise an EGF-like 7; calcium-binding domain in the interval 2012-2044; the sequence is HRMDQQCPRGWWGSPTCGPCNCDVHKGFDPNCN. A glycan (N-linked (GlcNAc...) asparagine) is linked at Asn2044. The EGF-like 8; calcium-binding domain maps to 2046-2081; it reads TSGQCHCKEFHYRPRGSDSCLPCDCYPVGSTSRSCA. 5 cysteine pairs are disulfide-bonded: Cys2050/Cys2065, Cys2052/Cys2068, Cys2070/Cys2080, Cys2089/Cys2098, and Cys2101/Cys2113. The region spanning 2068–2115 is the Laminin EGF-like domain; sequence CDCYPVGSTSRSCAPHSGQCPCRPGALGRQCNSCDSPFAEVTASGCRV. Tyr2117 is subject to Phosphotyrosine. N-linked (GlcNAc...) asparagine glycosylation is found at Asn2173, Asn2192, Asn2382, Asn2472, and Asn2504. The interval 2356–2395 is disordered; sequence HTHVLLPSQSPQPSPSEVLPTSSNAENATASGVVSPPAPL. Residues 2364 to 2528 enclose the GAIN-B domain; sequence QSPQPSPSEV…GVLMDASPRE (165 aa). Over residues 2374–2387 the composition is skewed to polar residues; sequence LPTSSNAENATASG. 2 disulfide bridges follow: Cys2478/Cys2510 and Cys2498/Cys2512. The GPS stretch occupies residues 2478–2528; the sequence is CVQWDPPGPADQHGMWTARDCELVHRNGSHARCRCSRTGTFGVLMDASPRE. The helical transmembrane segment at 2539-2559 threads the bilayer; sequence VFTHVVVAASVTALVLTAAVL. The Cytoplasmic segment spans residues 2560 to 2570; that stretch reads LSLRSLKSNVR. A helical transmembrane segment spans residues 2571-2591; that stretch reads GIHANVAAALGVAELLFLLGI. Over 2592-2599 the chain is Extracellular; sequence HRTHNQLL. A helical transmembrane segment spans residues 2600–2620; that stretch reads CTVVAILLHYFFLSTFAWLLV. The Cytoplasmic segment spans residues 2621-2641; that stretch reads QGLHLYRMQVEPRNVDRGAMR. The chain crosses the membrane as a helical span at residues 2642-2662; that stretch reads FYHALGWGVPAVLLGLAVGLD. Over 2663-2679 the chain is Extracellular; it reads PEGYGNPDFCWISIHEP. A helical transmembrane segment spans residues 2680–2700; the sequence is LIWSFAGPIVLVIVMNGIMFL. Residues 2701–2724 are Cytoplasmic-facing; sequence LAARTSCSTGQREAKKTSVLRTLR. Residues 2725–2745 traverse the membrane as a helical segment; it reads SSFLLLLLVSASWLFGLLAVN. Over 2746-2752 the chain is Extracellular; the sequence is HSVLAFH. The chain crosses the membrane as a helical span at residues 2753–2773; it reads YLHAGLCGLQGLAVLLLFCVL. Residues 2774 to 3313 are Cytoplasmic-facing; that stretch reads NADARAAWTP…SEVPRSEGHS (540 aa). 2 disordered regions span residues 2887–2927 and 2977–3004; these read AGAD…RPLR and SNKDAANNNQPELALTSGDETSLGRAQR. Residues 2889–2899 are compositionally biased toward acidic residues; that stretch reads ADSDSDSDLSL. The segment covering 2918–2927 has biased composition (basic residues); the sequence is TRGRFQRPLR. At Tyr3050 the chain carries Phosphotyrosine. 2 disordered regions span residues 3091–3242 and 3255–3313; these read APVL…PSTE and NSSA…EGHS. A Phosphoserine modification is found at Ser3098. Basic and acidic residues predominate over residues 3102–3119; sequence SQERLDTAPARLEPRDRG. Low complexity-rich tracts occupy residues 3178 to 3197 and 3255 to 3289; these read QRPLSRDPLLPSRPLDSLSR and NSSALSSVQSSSTPSGPHTTATPSATASALGPSTP. A compositionally biased stretch (polar residues) spans 3290 to 3301; the sequence is RSATSHSISELS.

It belongs to the G-protein coupled receptor 2 family. LN-TM7 subfamily. In terms of processing, the iron and 2-oxoglutarate dependent 3-hydroxylation of aspartate and asparagine is (R) stereospecific within EGF domains. In terms of tissue distribution, expressed in the brain. Expressed in cerebellum, olfactory bulb, cerebral cortex, hippocampus and brain stem.

It localises to the cell membrane. In terms of biological role, receptor that may have an important role in cell/cell signaling during nervous system formation. In Rattus norvegicus (Rat), this protein is Cadherin EGF LAG seven-pass G-type receptor 3 (Celsr3).